Here is a 139-residue protein sequence, read N- to C-terminus: Ribulose bisphosphate carboxylase small subunit, plasmid (139 aa).

It belongs to the RuBisCO small chain family. As to quaternary structure, heterohexadecamer of 8 large and 8 small subunits.

Its function is as follows. RuBisCO catalyzes two reactions: the carboxylation of D-ribulose 1,5-bisphosphate, the primary event in carbon dioxide fixation, as well as the oxidative fragmentation of the pentose substrate. Both reactions occur simultaneously and in competition at the same active site. Although the small subunit is not catalytic it is essential for maximal activity. This is Ribulose bisphosphate carboxylase small subunit, plasmid from Cupriavidus necator (strain ATCC 17699 / DSM 428 / KCTC 22496 / NCIMB 10442 / H16 / Stanier 337) (Ralstonia eutropha).